The chain runs to 242 residues: Lactate utilization protein A 2 (242 aa).

It belongs to the LutA/YkgE family.

In terms of biological role, is involved in L-lactate degradation and allows cells to grow with lactate as the sole carbon source. In Bacillus cereus (strain Q1), this protein is Lactate utilization protein A 2.